A 270-amino-acid polypeptide reads, in one-letter code: Proteasome inhibitor PI31 subunit (270 aa).

Position 2 is an N-acetylalanine (Ala2). Positions Ala2–Asn150 are important for homodimerization and interaction with FBXO7. Position 152 is a phosphoserine (Ser152). Residue Arg204 is modified to Omega-N-methylarginine. An Asymmetric dimethylarginine modification is found at Arg218. The interval Leu220 to Leu270 is disordered. Arg230 is modified (omega-N-methylarginine). Ser251 carries the post-translational modification Phosphoserine. Over residues Gly254–Gly264 the composition is skewed to pro residues.

Belongs to the proteasome inhibitor PI31 family. As to quaternary structure, monomer and homodimer. Interacts with FBXO7.

It is found in the cytoplasm. It localises to the endoplasmic reticulum. Plays an important role in control of proteasome function. Inhibits the hydrolysis of protein and peptide substrates by the 20S proteasome. Also inhibits the activation of the proteasome by the proteasome regulatory proteins PA700 and PA28. This is Proteasome inhibitor PI31 subunit (PSMF1) from Bos taurus (Bovine).